The chain runs to 341 residues: NADH-quinone oxidoreductase subunit H 1 (341 aa).

8 consecutive transmembrane segments (helical) span residues 13-33 (LVVIGQSLLLLILLLITIAYI), 82-102 (GVFLLAPLVSCVLALAAWAVI), 115-135 (VGVLYILAVSSLSVYGIIMAG), 161-181 (IGFVIIAVLLCVGSLNLTAIV), 190-210 (LLGWYWLPLFPVFVIFYVSAL), 248-268 (YVAITTMCAMGAILFLGGWLP), 277-297 (WVPGIIWFMLKGFFMFFLFAM), and 317-337 (VFLPLSLVMVVIVAGVLQFAG).

This sequence belongs to the complex I subunit 1 family. NDH-1 is composed of 14 different subunits. Subunits NuoA, H, J, K, L, M, N constitute the membrane sector of the complex.

It localises to the cell inner membrane. The enzyme catalyses a quinone + NADH + 5 H(+)(in) = a quinol + NAD(+) + 4 H(+)(out). Functionally, NDH-1 shuttles electrons from NADH, via FMN and iron-sulfur (Fe-S) centers, to quinones in the respiratory chain. The immediate electron acceptor for the enzyme in this species is believed to be ubiquinone. Couples the redox reaction to proton translocation (for every two electrons transferred, four hydrogen ions are translocated across the cytoplasmic membrane), and thus conserves the redox energy in a proton gradient. This subunit may bind ubiquinone. This is NADH-quinone oxidoreductase subunit H 1 from Rhodopseudomonas palustris (strain BisB18).